Reading from the N-terminus, the 376-residue chain is Queuine tRNA-ribosyltransferase (376 aa).

Asp89 acts as the Proton acceptor in catalysis. Substrate-binding positions include 89–93 (DSGGF), Asp143, Gln194, and Gly221. The interval 252–258 (GVGIPSN) is RNA binding. Catalysis depends on Asp271, which acts as the Nucleophile. The interval 276-280 (ARNGR) is RNA binding; important for wobble base 34 recognition. Zn(2+)-binding residues include Cys309, Cys311, Cys314, and His340.

This sequence belongs to the queuine tRNA-ribosyltransferase family. Homodimer. Within each dimer, one monomer is responsible for RNA recognition and catalysis, while the other monomer binds to the replacement base PreQ1. Requires Zn(2+) as cofactor.

The enzyme catalyses 7-aminomethyl-7-carbaguanine + guanosine(34) in tRNA = 7-aminomethyl-7-carbaguanosine(34) in tRNA + guanine. It participates in tRNA modification; tRNA-queuosine biosynthesis. Its function is as follows. Catalyzes the base-exchange of a guanine (G) residue with the queuine precursor 7-aminomethyl-7-deazaguanine (PreQ1) at position 34 (anticodon wobble position) in tRNAs with GU(N) anticodons (tRNA-Asp, -Asn, -His and -Tyr). Catalysis occurs through a double-displacement mechanism. The nucleophile active site attacks the C1' of nucleotide 34 to detach the guanine base from the RNA, forming a covalent enzyme-RNA intermediate. The proton acceptor active site deprotonates the incoming PreQ1, allowing a nucleophilic attack on the C1' of the ribose to form the product. After dissociation, two additional enzymatic reactions on the tRNA convert PreQ1 to queuine (Q), resulting in the hypermodified nucleoside queuosine (7-(((4,5-cis-dihydroxy-2-cyclopenten-1-yl)amino)methyl)-7-deazaguanosine). The sequence is that of Queuine tRNA-ribosyltransferase from Clostridium botulinum (strain Kyoto / Type A2).